The primary structure comprises 1238 residues: DNA-directed RNA polymerase subunit beta (1238 aa).

Residues glutamate 1187–isoleucine 1238 form a disordered region. A compositionally biased stretch (acidic residues) spans proline 1193 to isoleucine 1238.

The protein belongs to the RNA polymerase beta chain family. The RNAP catalytic core consists of 2 alpha, 1 beta, 1 beta' and 1 omega subunit. When a sigma factor is associated with the core the holoenzyme is formed, which can initiate transcription.

The enzyme catalyses RNA(n) + a ribonucleoside 5'-triphosphate = RNA(n+1) + diphosphate. Functionally, DNA-dependent RNA polymerase catalyzes the transcription of DNA into RNA using the four ribonucleoside triphosphates as substrates. This is DNA-directed RNA polymerase subunit beta from Thermoanaerobacter pseudethanolicus (strain ATCC 33223 / 39E) (Clostridium thermohydrosulfuricum).